The chain runs to 435 residues: ATP-dependent RNA helicase DBP8 (435 aa).

Residues 4 to 32 (SEFKSLGCSKWLVEALNAMKIVQPTAIQK) carry the Q motif motif. A Helicase ATP-binding domain is found at 35–211 (IPEILKGRDC…DAPQTEGKPP (177 aa)). 48-55 (ANTGSGKT) is a binding site for ATP. The DEAD box motif lies at 157 to 160 (DEAD). The Helicase C-terminal domain occupies 244–391 (YLYQILTSEK…FTDVGDTAVI (148 aa)). Residues 409–429 (MDKEGFGERRKLQKRKNESKE) are compositionally biased toward basic and acidic residues. The interval 409 to 435 (MDKEGFGERRKLQKRKNESKEKTHRRT) is disordered.

It belongs to the DEAD box helicase family. DDX49/DBP8 subfamily.

The protein localises to the nucleus. It localises to the nucleolus. The catalysed reaction is ATP + H2O = ADP + phosphate + H(+). Its function is as follows. ATP-binding RNA helicase involved in 40S ribosomal subunit biogenesis and is required for the normal formation of 18S rRNAs through pre-rRNA processing at A0, A1 and A2 sites. Required for vegetative growth. The polypeptide is ATP-dependent RNA helicase DBP8 (DBP8) (Kluyveromyces lactis (strain ATCC 8585 / CBS 2359 / DSM 70799 / NBRC 1267 / NRRL Y-1140 / WM37) (Yeast)).